The sequence spans 335 residues: Holliday junction branch migration complex subunit RuvB (335 aa).

The interval 4 to 184 is large ATPase domain (RuvB-L); the sequence is ADRLIQPTAL…FGIVQRLEFY (181 aa). ATP contacts are provided by residues Ile-23, Arg-24, Gly-65, Lys-68, Thr-69, Thr-70, 131–133, Arg-174, Tyr-184, and Arg-221; that span reads EDY. Thr-69 is a Mg(2+) binding site. A small ATPAse domain (RuvB-S) region spans residues 185–255; that stretch reads NIKDLTQIVK…VASAALDMLD (71 aa). The tract at residues 258 to 335 is head domain (RuvB-H); sequence KEGFDYMDRK…LHFGYDYEPN (78 aa). Residues Arg-294, Arg-313, and Arg-318 each contribute to the DNA site.

The protein belongs to the RuvB family. As to quaternary structure, homohexamer. Forms an RuvA(8)-RuvB(12)-Holliday junction (HJ) complex. HJ DNA is sandwiched between 2 RuvA tetramers; dsDNA enters through RuvA and exits via RuvB. An RuvB hexamer assembles on each DNA strand where it exits the tetramer. Each RuvB hexamer is contacted by two RuvA subunits (via domain III) on 2 adjacent RuvB subunits; this complex drives branch migration. In the full resolvosome a probable DNA-RuvA(4)-RuvB(12)-RuvC(2) complex forms which resolves the HJ.

It is found in the cytoplasm. It catalyses the reaction ATP + H2O = ADP + phosphate + H(+). Its function is as follows. The RuvA-RuvB-RuvC complex processes Holliday junction (HJ) DNA during genetic recombination and DNA repair, while the RuvA-RuvB complex plays an important role in the rescue of blocked DNA replication forks via replication fork reversal (RFR). RuvA specifically binds to HJ cruciform DNA, conferring on it an open structure. The RuvB hexamer acts as an ATP-dependent pump, pulling dsDNA into and through the RuvAB complex. RuvB forms 2 homohexamers on either side of HJ DNA bound by 1 or 2 RuvA tetramers; 4 subunits per hexamer contact DNA at a time. Coordinated motions by a converter formed by DNA-disengaged RuvB subunits stimulates ATP hydrolysis and nucleotide exchange. Immobilization of the converter enables RuvB to convert the ATP-contained energy into a lever motion, pulling 2 nucleotides of DNA out of the RuvA tetramer per ATP hydrolyzed, thus driving DNA branch migration. The RuvB motors rotate together with the DNA substrate, which together with the progressing nucleotide cycle form the mechanistic basis for DNA recombination by continuous HJ branch migration. Branch migration allows RuvC to scan DNA until it finds its consensus sequence, where it cleaves and resolves cruciform DNA. The protein is Holliday junction branch migration complex subunit RuvB of Pseudoalteromonas atlantica (strain T6c / ATCC BAA-1087).